Reading from the N-terminus, the 173-residue chain is Crossover junction endodeoxyribonuclease RuvC (173 aa).

Catalysis depends on residues Asp-8, Glu-67, and Asp-139. The Mg(2+) site is built by Asp-8, Glu-67, and Asp-139.

It belongs to the RuvC family. Homodimer which binds Holliday junction (HJ) DNA. The HJ becomes 2-fold symmetrical on binding to RuvC with unstacked arms; it has a different conformation from HJ DNA in complex with RuvA. In the full resolvosome a probable DNA-RuvA(4)-RuvB(12)-RuvC(2) complex forms which resolves the HJ. The cofactor is Mg(2+).

Its subcellular location is the cytoplasm. The enzyme catalyses Endonucleolytic cleavage at a junction such as a reciprocal single-stranded crossover between two homologous DNA duplexes (Holliday junction).. Its function is as follows. The RuvA-RuvB-RuvC complex processes Holliday junction (HJ) DNA during genetic recombination and DNA repair. Endonuclease that resolves HJ intermediates. Cleaves cruciform DNA by making single-stranded nicks across the HJ at symmetrical positions within the homologous arms, yielding a 5'-phosphate and a 3'-hydroxyl group; requires a central core of homology in the junction. The consensus cleavage sequence is 5'-(A/T)TT(C/G)-3'. Cleavage occurs on the 3'-side of the TT dinucleotide at the point of strand exchange. HJ branch migration catalyzed by RuvA-RuvB allows RuvC to scan DNA until it finds its consensus sequence, where it cleaves and resolves the cruciform DNA. This is Crossover junction endodeoxyribonuclease RuvC from Shewanella oneidensis (strain ATCC 700550 / JCM 31522 / CIP 106686 / LMG 19005 / NCIMB 14063 / MR-1).